We begin with the raw amino-acid sequence, 1189 residues long: Phosphatidylinositol 3,4,5-trisphosphate 5-phosphatase 1 (1189 aa).

Positions 5 to 101 constitute an SH2 domain; it reads WNHGNITRSK…GLVTHLQYPV (97 aa). A compositionally biased stretch (acidic residues) spans 103–117; it reads LEEEDTGDDPEEDTV. The disordered stretch occupies residues 103–132; the sequence is LEEEDTGDDPEEDTVESVVSPPELPPRNIP. An SH3-binding 1 motif is present at residues 124–129; the sequence is PELPPR. Residue S243 is modified to Phosphoserine. The segment at 870-906 is disordered; that stretch reads TERDESSGPKTLKSLTSHDPMKQWEVTSRAPPCSGSS. The NPXY motif 1 motif lies at 912–915; the sequence is NPNY. Y915 carries the post-translational modification Phosphotyrosine. The disordered stretch occupies residues 922-1189; that stretch reads GPPMPLHVKQ…PGPLGRTAMQ (268 aa). Positions 931–943 are enriched in polar residues; sequence QTLSPDQQPTAWS. S934 carries the phosphoserine modification. Residue Y944 is modified to Phosphotyrosine. At S960 the chain carries Phosphoserine. Positions 961 to 971 are enriched in pro residues; it reads PPTPPGQPPIS. T963 carries the phosphothreonine modification. The SH3-binding 2 signature appears at 969–974; sequence PISPKK. Phosphoserine is present on S971. The segment at 1016–1030 is interaction with DAB2; that stretch reads MFENPLYGSLSSFPK. Residues 1019–1022 carry the NPXY motif 2 motif; sequence NPLY. Y1022 carries the post-translational modification Phosphotyrosine. The span at 1033-1047 shows a compositional bias: basic and acidic residues; it reads PRKDQESPKMPRKEP. Positions 1040 to 1051 match the SH3-binding 3 motif; the sequence is PKMPRKEPPPCP. Residues 1134–1145 are compositionally biased toward pro residues; it reads PPTPTPRPPLPV. Over residues 1157 to 1177 the composition is skewed to basic and acidic residues; that stretch reads KGRDYRDNTELPHHGKHRPEE.

Belongs to the inositol 1,4,5-trisphosphate 5-phosphatase family. In terms of assembly, interacts with tyrosine phosphorylated form of SHC1. Interacts with tyrosine phosphorylated form of DOK1. Interacts with tyrosine phosphorylated form of DOK3. Interacts with tyrosine phosphorylated form of SLAMF1/CD150. Interacts with PTPN11 in response to IL-3. Interacts with receptor EPOR. Interacts with receptors MS4A2/FCER1B and FCER1G. Interacts with receptors FCGR2B and FCGR3. Interacts with receptor FCGR2A, leading to regulate gene expression during the phagocytic process. Interacts with GRB2. Interacts with PLCG1. Interacts with tyrosine kinases SRC and TEC. Interacts with c-Met/MET. Interacts with MILR1 (tyrosine-phosphorylated). Can weakly interact (via NPXY motif 2) with DAB2 (via PID domain); the interaction is impaired by tyrosine phosphorylation of the NPXY motif. Interacts with FCRL3 and FCRL6 (tyrosine phosphorylated form). Interacts (via SH2 domain) with tyrosine phosphorylated KLRC1 (via ITIM). Interacts with MPL/TPOR. In terms of processing, tyrosine phosphorylated by the members of the SRC family after exposure to a diverse array of extracellular stimuli such as cytokines, growth factors, antibodies, chemokines, integrin ligands and hypertonic and oxidative stress. Phosphorylated upon IgG receptor FCGR2B-binding. In terms of tissue distribution, specifically expressed in immune and hematopoietic cells. Expressed in bone marrow and blood cells. Levels vary considerably within this compartment. Present in at least 74% of immature CD34+ cells, whereas within the more mature population of CD33+ cells, it is present in only 10% of cells. Present in the majority of T-cells, while it is present in a minority of B-cells (at protein level).

The protein resides in the cytoplasm. It is found in the cell membrane. It localises to the membrane raft. Its subcellular location is the cytoskeleton. The protein localises to the membrane. The enzyme catalyses a 1,2-diacyl-sn-glycero-3-phospho-(1D-myo-inositol-3,4,5-trisphosphate) + H2O = a 1,2-diacyl-sn-glycero-3-phospho-(1D-myo-inositol-3,4-bisphosphate) + phosphate. It catalyses the reaction 1D-myo-inositol 1,3,4,5-tetrakisphosphate + H2O = 1D-myo-inositol 1,3,4-trisphosphate + phosphate. The catalysed reaction is a 1,2-diacyl-sn-glycero-3-phospho-(1D-myo-inositol-4,5-bisphosphate) + H2O = a 1,2-diacyl-sn-glycero-3-phospho-(1D-myo-inositol 4-phosphate) + phosphate. Its activity is regulated as follows. Activated upon translocation to the sites of synthesis of PtdIns(3,4,5)P3 in the membrane. Phosphatidylinositol (PtdIns) phosphatase that specifically hydrolyzes the 5-phosphate of phosphatidylinositol-3,4,5-trisphosphate (PtdIns(3,4,5)P3) to produce PtdIns(3,4)P2, thereby negatively regulating the PI3K (phosphoinositide 3-kinase) pathways. Able also to hydrolyzes the 5-phosphate of phosphatidylinositol-4,5-bisphosphate (PtdIns(4,5)P3) and inositol 1,3,4,5-tetrakisphosphate. Acts as a negative regulator of B-cell antigen receptor signaling. Mediates signaling from the FC-gamma-RIIB receptor (FCGR2B), playing a central role in terminating signal transduction from activating immune/hematopoietic cell receptor systems. Acts as a negative regulator of myeloid cell proliferation/survival and chemotaxis, mast cell degranulation, immune cells homeostasis, integrin alpha-IIb/beta-3 signaling in platelets and JNK signaling in B-cells. Regulates proliferation of osteoclast precursors, macrophage programming, phagocytosis and activation and is required for endotoxin tolerance. Involved in the control of cell-cell junctions, CD32a signaling in neutrophils and modulation of EGF-induced phospholipase C activity. Key regulator of neutrophil migration, by governing the formation of the leading edge and polarization required for chemotaxis. Modulates FCGR3/CD16-mediated cytotoxicity in NK cells. Mediates the activin/TGF-beta-induced apoptosis through its Smad-dependent expression. The protein is Phosphatidylinositol 3,4,5-trisphosphate 5-phosphatase 1 (INPP5D) of Homo sapiens (Human).